The chain runs to 287 residues: BURP domain-containing protein 2 (287 aa).

Residues 1-21 (MARSLAALLLLLVAAAGASHA) form the signal peptide. The 221-residue stretch at 67-287 (FFLEKDLFPG…PQDDMLWVRN (221 aa)) folds into the BURP domain.

Expressed in shoot.

The sequence is that of BURP domain-containing protein 2 (BURP2) from Oryza sativa subsp. japonica (Rice).